Here is a 104-residue protein sequence, read N- to C-terminus: Guanidinium exporter (104 aa).

Residue Met1 is a topological domain, cytoplasmic. The chain crosses the membrane as a helical span at residues 2-19; the sequence is AWIILVIAGLLEVIWAIG. The Periplasmic segment spans residues 20–28; that stretch reads LKYSHGFSR. A helical transmembrane segment spans residues 29–48; the sequence is LTPSIITLVAMAASVFLLAY. At 49-54 the chain is on the cytoplasmic side; it reads AMKSLP. The helical transmembrane segment at 55–77 threads the bilayer; sequence AGTAYAVWTGIGAVGTAILGIVL. Topologically, residues 78 to 81 are periplasmic; the sequence is LGES. A helical membrane pass occupies residues 82–100; sequence ASLARILSLGLILAGIIGL. Residues 101–104 are Cytoplasmic-facing; sequence KLAS.

It belongs to the drug/metabolite transporter (DMT) superfamily. Small multidrug resistance (SMR) (TC 2.A.7.1) family. Gdx/SugE subfamily.

Its subcellular location is the cell inner membrane. Its function is as follows. Guanidinium ion exporter. Couples guanidinium export to the proton motive force, exchanging one guanidinium ion for two protons. This Yersinia pestis protein is Guanidinium exporter.